Here is a 614-residue protein sequence, read N- to C-terminus: Putative N(6)-adenosine-methyltransferase MT-A70-like (614 aa).

Residues 59–78 (TPPLTNFNPPKSSSLQQLPQ) form a disordered region. The segment covering 67 to 78 (PPKSSSLQQLPQ) has biased composition (low complexity). Residues 391–392 (DI) and Asp409 each bind S-adenosyl-L-methionine. Residues 479–492 (RIIRTGRTGHWLNH) are positively charged region required for RNA-binding. Residues Lys526, 549 to 552 (RMHN), and 562 to 563 (NQ) each bind S-adenosyl-L-methionine. The interval 589–614 (PASPSRASAMELDSSVAAQTTTSAMM) is disordered. A compositionally biased stretch (polar residues) spans 604-614 (VAAQTTTSAMM).

The protein belongs to the MT-A70-like family.

It is found in the nucleus. It carries out the reaction an adenosine in mRNA + S-adenosyl-L-methionine = an N(6)-methyladenosine in mRNA + S-adenosyl-L-homocysteine + H(+). Putative N6-methyltransferase that methylates adenosine residues of some mRNAs. N6-methyladenosine (m6A), which is present at internal sites of some mRNAs, may play a role in the efficiency of mRNA splicing, transport or translation. This is Putative N(6)-adenosine-methyltransferase MT-A70-like from Medicago truncatula (Barrel medic).